Reading from the N-terminus, the 314-residue chain is ATP synthase gamma chain (314 aa).

The protein belongs to the ATPase gamma chain family. As to quaternary structure, F-type ATPases have 2 components, CF(1) - the catalytic core - and CF(0) - the membrane proton channel. CF(1) has five subunits: alpha(3), beta(3), gamma(1), delta(1), epsilon(1). CF(0) has three main subunits: a, b and c.

It localises to the cellular thylakoid membrane. Its function is as follows. Produces ATP from ADP in the presence of a proton gradient across the membrane. The gamma chain is believed to be important in regulating ATPase activity and the flow of protons through the CF(0) complex. In Gloeothece citriformis (strain PCC 7424) (Cyanothece sp. (strain PCC 7424)), this protein is ATP synthase gamma chain.